Here is a 42-residue protein sequence, read N- to C-terminus: Potassium channel toxin gamma-KTx 1.4 (42 aa).

Disulfide bonds link Cys5-Cys23, Cys11-Cys34, Cys20-Cys39, and Cys24-Cys41.

It belongs to the ergtoxin family. Gamma-KTx 1 subfamily. In terms of tissue distribution, expressed by the venom gland.

It localises to the secreted. Functionally, blocks Kv11/ERG potassium channels. This Centruroides sculpturatus (Arizona bark scorpion) protein is Potassium channel toxin gamma-KTx 1.4.